The chain runs to 56 residues: Probable head completion protein 2 (56 aa).

The protein belongs to the skunalikevirus head completion protein 2 family.

It localises to the virion. Its function is as follows. Probably functions as a stopper that is part of the head-tail connector and that locks the viral DNA in the capsid. During assembly, functions as a docking platform which the preassembled tail can bind to. Plays a role in morphogenesis of the virion capsid after genome packaging. This chain is Probable head completion protein 2, found in Lactococcus lactis (Lactococcus lactis bacteriophage SK1).